The sequence spans 307 residues: MKNLQQRGHLLTEQVNPNSHNLDQLSSLELVDLFNQEDKQTLKAIASSRLQLAQAVDMTTKALSQGGKLFYVGAGTSGRLGVLDAAECPPTFCTSPELVQGIIAGGANALLRSSEDLEDSWEDGNEAIASHNITNLDVIVGITAGGTTPYVHGALEGAKQRAAKTIFITCVPVEQFSIKVDVDIRLLVGPELLSGSTRLKAGTVTKMALNILSTGVMVRLGKVYGNRMIDVAIKNSKLRDRALRIIEDLTELSRDEAEELLNKSGDSVKLALLMHWSNLKKEEGDRVLSEYQGNLRAAMKNVSFSTE.

The 164-residue stretch at 59-222 (TTKALSQGGK…STGVMVRLGK (164 aa)) folds into the SIS domain. The active-site Proton donor is glutamate 87. Residue glutamate 118 is part of the active site.

This sequence belongs to the GCKR-like family. MurNAc-6-P etherase subfamily. As to quaternary structure, homodimer.

The enzyme catalyses N-acetyl-D-muramate 6-phosphate + H2O = N-acetyl-D-glucosamine 6-phosphate + (R)-lactate. Its pathway is amino-sugar metabolism; N-acetylmuramate degradation. Functionally, specifically catalyzes the cleavage of the D-lactyl ether substituent of MurNAc 6-phosphate, producing GlcNAc 6-phosphate and D-lactate. The sequence is that of N-acetylmuramic acid 6-phosphate etherase from Trichodesmium erythraeum (strain IMS101).